Reading from the N-terminus, the 701-residue chain is Polyribonucleotide nucleotidyltransferase (701 aa).

Aspartate 485 and aspartate 491 together coordinate Mg(2+). The 60-residue stretch at 552-611 (PRIIKIRINPEKIRDVIGKGGAVIRALTEETGTTIDITDDGTVMIACVNAEGGELAKKRI) folds into the KH domain. An S1 motif domain is found at 621-689 (GRVYDGTVLK…DKGRLRLSMK (69 aa)).

It belongs to the polyribonucleotide nucleotidyltransferase family. Mg(2+) is required as a cofactor.

The protein localises to the cytoplasm. It catalyses the reaction RNA(n+1) + phosphate = RNA(n) + a ribonucleoside 5'-diphosphate. In terms of biological role, involved in mRNA degradation. Catalyzes the phosphorolysis of single-stranded polyribonucleotides processively in the 3'- to 5'-direction. The protein is Polyribonucleotide nucleotidyltransferase of Nitrosospira multiformis (strain ATCC 25196 / NCIMB 11849 / C 71).